We begin with the raw amino-acid sequence, 700 residues long: Polyribonucleotide nucleotidyltransferase (700 aa).

2 residues coordinate Mg(2+): aspartate 486 and aspartate 492. Positions 554 to 613 constitute a KH domain; it reads PKIISTTINPDKIREVIGPGGKMINKIIDETGVKIDINDDGRVYIFSSDIQAGKRARSMI. The S1 motif domain occupies 623-691; it reads GQVFLGRVIR…KQGRVNLSRK (69 aa).

The protein belongs to the polyribonucleotide nucleotidyltransferase family. The cofactor is Mg(2+).

Its subcellular location is the cytoplasm. It catalyses the reaction RNA(n+1) + phosphate = RNA(n) + a ribonucleoside 5'-diphosphate. In terms of biological role, involved in mRNA degradation. Catalyzes the phosphorolysis of single-stranded polyribonucleotides processively in the 3'- to 5'-direction. The chain is Polyribonucleotide nucleotidyltransferase from Acetivibrio thermocellus (strain ATCC 27405 / DSM 1237 / JCM 9322 / NBRC 103400 / NCIMB 10682 / NRRL B-4536 / VPI 7372) (Clostridium thermocellum).